We begin with the raw amino-acid sequence, 258 residues long: Tryptophan synthase alpha chain (258 aa).

Residues Glu47 and Asp58 each act as proton acceptor in the active site.

The protein belongs to the TrpA family. As to quaternary structure, tetramer of two alpha and two beta chains.

The catalysed reaction is (1S,2R)-1-C-(indol-3-yl)glycerol 3-phosphate + L-serine = D-glyceraldehyde 3-phosphate + L-tryptophan + H2O. It functions in the pathway amino-acid biosynthesis; L-tryptophan biosynthesis; L-tryptophan from chorismate: step 5/5. The alpha subunit is responsible for the aldol cleavage of indoleglycerol phosphate to indole and glyceraldehyde 3-phosphate. The sequence is that of Tryptophan synthase alpha chain from Bacillus cereus (strain G9842).